The primary structure comprises 811 residues: Phenylalanine--tRNA ligase beta subunit (811 aa).

Residues 39–151 (RTWAAGVVVG…AGLQAGQPVG (113 aa)) form the tRNA-binding domain. The 87-residue stretch at 409 to 495 (EPEHSITLRL…RLYGYDNFGE (87 aa)) folds into the B5 domain. Mg(2+) contacts are provided by aspartate 473, aspartate 479, glutamate 482, and glutamate 483. The region spanning 717–810 (SSFPASDRDL…LVERFRVTLR (94 aa)) is the FDX-ACB domain.

Belongs to the phenylalanyl-tRNA synthetase beta subunit family. Type 1 subfamily. In terms of assembly, tetramer of two alpha and two beta subunits. Mg(2+) is required as a cofactor.

It localises to the cytoplasm. It carries out the reaction tRNA(Phe) + L-phenylalanine + ATP = L-phenylalanyl-tRNA(Phe) + AMP + diphosphate + H(+). This Synechococcus sp. (strain ATCC 27144 / PCC 6301 / SAUG 1402/1) (Anacystis nidulans) protein is Phenylalanine--tRNA ligase beta subunit.